The primary structure comprises 387 residues: Alpha-maltose-1-phosphate synthase (387 aa).

This sequence belongs to the glycosyltransferase group 1 family.

It catalyses the reaction ADP-alpha-D-glucose + alpha-D-glucose 1-phosphate = alpha-maltose 1-phosphate + ADP + H(+). The protein operates within glycan biosynthesis; glycogen biosynthesis. In terms of biological role, involved in the biosynthesis of the maltose-1-phosphate (M1P) building block required for alpha-glucan production by the key enzyme GlgE. Catalyzes the formation of an alpha-1,4 linkage between glucose from ADP-glucose and glucose 1-phosphate (G1P) to yield maltose-1-phosphate (M1P). This chain is Alpha-maltose-1-phosphate synthase, found in Mycolicibacterium smegmatis (strain ATCC 700084 / mc(2)155) (Mycobacterium smegmatis).